The sequence spans 963 residues: Protein NLP2 (963 aa).

Positions 635-716 constitute an RWP-RK domain; that stretch reads RRPGEKRRTK…IDSVQGVQGS (82 aa). The segment covering 734–755 has biased composition (polar residues); sequence MSGTGTSFKNPNAQTENGVSAQ. The disordered stretch occupies residues 734–794; the sequence is MSGTGTSFKN…QSTNTGTTSN (61 aa). Low complexity predominate over residues 756–794; that stretch reads GTAAAPKSPPSSSCSHSSGSSTCCSTGANQSTNTGTTSN. The PB1 domain maps to 862–945; sequence ASKVKATFGE…RTIKISVHEA (84 aa).

It is found in the nucleus. Probable transcription factor. The sequence is that of Protein NLP2 (NLP2) from Arabidopsis thaliana (Mouse-ear cress).